Here is a 603-residue protein sequence, read N- to C-terminus: Elongation factor 4 (603 aa).

The region spanning 5-187 (RHIRNFCIIA…AVVNFVPPPK (183 aa)) is the tr-type G domain. GTP is bound by residues 17-22 (DHGKST) and 134-137 (NKID).

This sequence belongs to the TRAFAC class translation factor GTPase superfamily. Classic translation factor GTPase family. LepA subfamily.

It is found in the cell membrane. It catalyses the reaction GTP + H2O = GDP + phosphate + H(+). In terms of biological role, required for accurate and efficient protein synthesis under certain stress conditions. May act as a fidelity factor of the translation reaction, by catalyzing a one-codon backward translocation of tRNAs on improperly translocated ribosomes. Back-translocation proceeds from a post-translocation (POST) complex to a pre-translocation (PRE) complex, thus giving elongation factor G a second chance to translocate the tRNAs correctly. Binds to ribosomes in a GTP-dependent manner. The polypeptide is Elongation factor 4 (Symbiobacterium thermophilum (strain DSM 24528 / JCM 14929 / IAM 14863 / T)).